A 352-amino-acid chain; its full sequence is Staphylococcal superantigen-like 3 (352 aa).

An N-terminal signal peptide occupies residues 1–30; the sequence is MKMRTIAKTSLALGLLTTGAITVTTQSVKA. Positions 61 to 165 are disordered; the sequence is ATTQAANTRQ…TIKQAQTDMT (105 aa). Positions 69–104 are enriched in basic and acidic residues; the sequence is RQERTPKLEKAPNTNEEKTSASKIEKISQPKQEEQK. A compositionally biased stretch (low complexity) spans 114–141; the sequence is PKQEQSQTTTESTTPKTKVTTPPSTNTP. The segment covering 142–164 has biased composition (polar residues); it reads QPMQSTKSDTPQSPTIKQAQTDM. The tract at residues 228 to 326 is sialyl Lewis X-binding; that stretch reads IDVFIVLEDN…VIKMKNGGKY (99 aa).

It belongs to the staphylococcal/streptococcal toxin family. As to quaternary structure, interacts with host TLR2 (via its extracellular domain).

Its subcellular location is the secreted. Secreted protein that plays an essential role in immune innate response inhibition by interacting with and inhibiting host TLR2. In turn, bacteria recognition by immune cells is impaired and cytokine production is inhibited. Mechanistically, by interacting with TLR2, blocks ligand binding and thus inhibits activation. Second, by interacting with an already formed TLR2-lipopeptide complex, prevents TLR heterodimerization and downstream signaling. The interaction with host TLR2 does not involve sialyl Lewis X interactions. The protein is Staphylococcal superantigen-like 3 of Staphylococcus aureus (strain Newman).